The following is a 179-amino-acid chain: B-cell acute lymphoblastic leukemia-expressed protein (179 aa).

Disordered regions lie at residues 1-20 (MMKD…TDLQ) and 65-86 (RDTP…RGKA). A compositionally biased stretch (polar residues) spans 10–20 (SWASEESTDLQ).

This Homo sapiens (Human) protein is B-cell acute lymphoblastic leukemia-expressed protein (BLACE).